Consider the following 539-residue polypeptide: 2-isopropylmalate synthase (539 aa).

The region spanning 8-269 is the Pyruvate carboxyltransferase domain; it reads VLIFDTTLRD…YFNPFFGRPP (262 aa). Mn(2+) contacts are provided by D17, H208, H210, and N244. The segment at 408-539 is regulatory domain; it reads QLKLVQVSCG…DLAKVEKKGI (132 aa).

It belongs to the alpha-IPM synthase/homocitrate synthase family. LeuA type 1 subfamily. As to quaternary structure, homodimer. Mn(2+) serves as cofactor.

Its subcellular location is the cytoplasm. The catalysed reaction is 3-methyl-2-oxobutanoate + acetyl-CoA + H2O = (2S)-2-isopropylmalate + CoA + H(+). It participates in amino-acid biosynthesis; L-leucine biosynthesis; L-leucine from 3-methyl-2-oxobutanoate: step 1/4. In terms of biological role, catalyzes the condensation of the acetyl group of acetyl-CoA with 3-methyl-2-oxobutanoate (2-ketoisovalerate) to form 3-carboxy-3-hydroxy-4-methylpentanoate (2-isopropylmalate). The polypeptide is 2-isopropylmalate synthase (Prochlorococcus marinus (strain NATL2A)).